A 105-amino-acid chain; its full sequence is Circadian clock oscillator protein KaiB (105 aa).

It belongs to the KaiB family. In terms of assembly, the KaiABC complex composition changes during the circadian cycle to control KaiC phosphorylation. Complexes KaiC(6), KaiA(2-4):KaiC(6), KaiB(6):KaiC(6) and KaiC(6):KaiB(6):KaiA(12) are among the most important forms, many form cooperatively. Undergoes a major conformational rearrangment; in the free state forms homotetramers as a dimer of dimers. When bound to the CI domain of KaiC switches to a monomeric thioredoxin-fold (KaiB(fs)). KaiB(fs) binds CikA, leading it to dephosphorylate phospho-RpaA.

Its function is as follows. Key component of the KaiABC oscillator complex, which constitutes the main circadian regulator in cyanobacteria. Complex composition changes during the circadian cycle to control KaiC phosphorylation. KaiA stimulates KaiC autophosphorylation, while KaiB sequesters KaiA, leading to KaiC autodephosphorylation. Phospho-Ser-431 KaiC accumulation triggers binding of KaiB to form the KaiB(6):KaiC(6) complex, leading to changes in output regulators CikA and SasA. KaiB switches to a thioredoxin-like fold (KaiB(fs)) when bound to KaiC. KaiB(6):KaiC(6) formation exposes a site for KaiA binding that sequesters KaiA from KaiC, making the KaiC(6):KaiB(6):KaiA(12) complex that results in KaiC autodephosphorylation. A metamorphic protein which reversibly switches between an inactive tetrameric fold and a rare, thioredoxin-like monomeric fold (KaiB(fs)). KaiB(fs) binds phospho-KaiC, KaiA and CikA. KaiA and CikA compete for binding to KaiB(fs), and KaiB(fs) and SasA compete for binding to KaiC, thus the clock oscillator and output signal pathway are tightly coupled. In Cyanothece sp. (strain PCC 7425 / ATCC 29141), this protein is Circadian clock oscillator protein KaiB.